The primary structure comprises 404 residues: Metacaspase-1 (404 aa).

The tract at residues 1–97 is disordered; sequence MHHHHQQPSY…NPQAFGHGAP (97 aa). Active-site residues include His-195 and Cys-251.

The protein belongs to the peptidase C14B family.

In terms of biological role, involved in cell death (apoptosis). This is Metacaspase-1 (casA) from Emericella nidulans (strain FGSC A4 / ATCC 38163 / CBS 112.46 / NRRL 194 / M139) (Aspergillus nidulans).